The chain runs to 95 residues: Small ribosomal subunit protein bS6 (95 aa).

This sequence belongs to the bacterial ribosomal protein bS6 family.

Binds together with bS18 to 16S ribosomal RNA. This is Small ribosomal subunit protein bS6 from Oceanobacillus iheyensis (strain DSM 14371 / CIP 107618 / JCM 11309 / KCTC 3954 / HTE831).